A 608-amino-acid chain; its full sequence is Leucine aminopeptidase 2 (608 aa).

Substrate-binding positions include 134–136 and 269–274; these read QCQ and PYGGME. His298 is a binding site for Zn(2+). Glu299 acts as the Proton acceptor in catalysis. Zn(2+) is bound by residues His302 and Glu321. Tyr386 serves as the catalytic Proton donor.

The protein belongs to the peptidase M1 family. Requires Zn(2+) as cofactor.

The protein localises to the cytoplasm. It localises to the nucleus. The enzyme catalyses an epoxide + H2O = an ethanediol. Functionally, aminopeptidase that preferentially cleaves di- and tripeptides. Also has low epoxide hydrolase activity (in vitro). Can hydrolyze the epoxide leukotriene LTA(4) but it forms preferentially 5,6-dihydroxy-7,9,11,14-eicosatetraenoic acid rather than the cytokine leukotriene B(4) as the product compared to the homologous mammalian enzyme (in vitro). In Sclerotinia sclerotiorum (strain ATCC 18683 / 1980 / Ss-1) (White mold), this protein is Leucine aminopeptidase 2.